Here is a 328-residue protein sequence, read N- to C-terminus: Fructokinase-2 (328 aa).

It belongs to the carbohydrate kinase PfkB family.

The catalysed reaction is D-fructose + ATP = D-fructose 6-phosphate + ADP + H(+). It functions in the pathway glycan biosynthesis; starch biosynthesis. Its function is as follows. May play an important role in maintaining the flux of carbon towards starch formation. The polypeptide is Fructokinase-2 (FRK2) (Solanum habrochaites (Wild tomato)).